Consider the following 82-residue polypeptide: Small ribosomal subunit protein uS17 (82 aa).

Belongs to the universal ribosomal protein uS17 family. As to quaternary structure, part of the 30S ribosomal subunit.

Functionally, one of the primary rRNA binding proteins, it binds specifically to the 5'-end of 16S ribosomal RNA. The sequence is that of Small ribosomal subunit protein uS17 from Rickettsia typhi (strain ATCC VR-144 / Wilmington).